The chain runs to 90 residues: Cell division topological specificity factor (90 aa).

Belongs to the MinE family.

In terms of biological role, prevents the cell division inhibition by proteins MinC and MinD at internal division sites while permitting inhibition at polar sites. This ensures cell division at the proper site by restricting the formation of a division septum at the midpoint of the long axis of the cell. This chain is Cell division topological specificity factor, found in Francisella philomiragia subsp. philomiragia (strain ATCC 25017 / CCUG 19701 / FSC 153 / O#319-036).